The sequence spans 410 residues: Zinc transporter ttm-1 (410 aa).

Composition is skewed to low complexity over residues 1–13 and 35–46; these read MTIS…SIRL and SVSSSDSGVSAD. Positions 1–94 are disordered; it reads MTISMISPSS…GAHKHSHDEK (94 aa). Residues 1 to 103 are Cytoplasmic-facing; the sequence is MTISMISPSS…KYQKGRRAEK (103 aa). Residues 50-69 are compositionally biased toward basic residues; that stretch reads HHHHGHGHGHSHGGHGHSHT. The chain crosses the membrane as a helical span at residues 104-124; it reads VLWAVAALSAVFIAAEFVGGF. At 125–129 the chain is on the extracellular side; it reads WAQSL. Residues 130–150 traverse the membrane as a helical segment; it reads AIMTDAGHMLSDLLSFIISIF. The Cytoplasmic portion of the chain corresponds to 151 to 171; sequence AIRCARLPASKRLSFGYERAE. The chain crosses the membrane as a helical span at residues 172-192; sequence VLGALTSVIILWVLTTVLVVV. Residues 193-208 lie on the Extracellular side of the membrane; sequence AIQRIVNNEHEVDADV. The chain crosses the membrane as a helical span at residues 209 to 229; the sequence is MLITAGVGVLFNIVMGLVLHF. The Cytoplasmic portion of the chain corresponds to 230-258; sequence GTGGHGHTHGGHSSHGHAHDGKNVNVRAA. A helical transmembrane segment spans residues 259-279; that stretch reads LIHVIGDLVQSIGVLIAALII. Residue arginine 280 is a topological domain, extracellular. A helical membrane pass occupies residues 281–301; it reads FTGWTLADPICTFLFSIIVLF. The Cytoplasmic portion of the chain corresponds to 302–410; that stretch reads TTVTVMRDIF…CDTCQQQETA (109 aa).

The protein belongs to the cation diffusion facilitator (CDF) transporter (TC 2.A.4) family. SLC30A subfamily. As to expression, isoform a: Expressed in the hypodermis and the intestine. Isoform b: Expressed in the intestine, head neurons, seam cells, hypodermis, and the vulva.

The protein resides in the cytoplasmic vesicle membrane. It is found in the apical cell membrane. In terms of biological role, promotes excretion of zinc from intestinal cells into the intestinal lumen in response to increased dietary zinc. Involved in cadmium resistance, possibly by promoting its transport from cells. Involved in resistance to B.thuringiensis pore-forming toxin Cry5B downstream of the sek-1 and pmk-1 MAPK kinase pathway. This chain is Zinc transporter ttm-1, found in Caenorhabditis elegans.